The primary structure comprises 1271 residues: Clustered mitochondria protein homolog (1271 aa).

TPR repeat units lie at residues 104-138 (RHKP…ELGE) and 502-535 (CYGL…KPHK). Residues 329-580 (DQSRPQLSIL…RSTPLDIDFI (252 aa)) form the Clu domain. Residues 729 to 763 (QEEKSKIEDNEKAIEEEKKEEKTEKKEEKEEKADE) show a composition bias toward basic and acidic residues. Positions 729 to 783 (QEEKSKIEDNEKAIEEEKKEEKTEKKEEKEEKADEEKSENEEDKTKPEEPSKGVF) are disordered. TPR repeat units lie at residues 1067-1100 (ISSY…WDFV), 1109-1142 (VTTL…SEKI), and 1151-1184 (AMIH…FSRH). The tract at residues 1212–1271 (QAKDKNKPKKVKAPPVPPQATTKKSKNKSKMAQTQISKLHLNSSTRFSSSSRVKPRLKKK) is disordered. The span at 1241–1253 (KMAQTQISKLHLN) shows a compositional bias: polar residues. The segment covering 1254-1263 (SSTRFSSSSR) has biased composition (low complexity).

Belongs to the CLU family. In terms of assembly, may associate with the eukaryotic translation initiation factor 3 (eIF-3) complex.

The protein resides in the cytoplasm. MRNA-binding protein involved in proper cytoplasmic distribution of mitochondria. The polypeptide is Clustered mitochondria protein homolog (Meyerozyma guilliermondii (strain ATCC 6260 / CBS 566 / DSM 6381 / JCM 1539 / NBRC 10279 / NRRL Y-324) (Yeast)).